The primary structure comprises 689 residues: Glycine--tRNA ligase beta subunit (689 aa).

It belongs to the class-II aminoacyl-tRNA synthetase family. In terms of assembly, tetramer of two alpha and two beta subunits.

It is found in the cytoplasm. The enzyme catalyses tRNA(Gly) + glycine + ATP = glycyl-tRNA(Gly) + AMP + diphosphate. This is Glycine--tRNA ligase beta subunit from Hamiltonella defensa subsp. Acyrthosiphon pisum (strain 5AT).